We begin with the raw amino-acid sequence, 1596 residues long: Cellulose synthase 2 (1596 aa).

Residues 1–749 (MIYRAILKRL…RSARHGATAS (749 aa)) are catalytic. 2 helical membrane-spanning segments follow: residues 25–45 (SPFVMMAVGVFLMLMAGGVTI) and 106–126 (LSLLLVAAELYALLTLCLSYF). The interval 145 to 238 (DWPVVDVYVP…YVVIFDCDHI (94 aa)) is catalytic subdomain A. The active site involves Asp-187. The substrate site is built by Asp-234 and Asp-236. Residues 315–375 (SAVLGIGGFA…GQRVRWARGM (61 aa)) are catalytic subdomain B. Residue Asp-331 is part of the active site. A run of 4 helical transmembrane segments spans residues 396–416 (LCYLSAMSHFLFAIPRLVFLA), 421–441 (FLFLGQNIIAASPFAILVYAF), 505–525 (FDLNAVYPNVILAVILALALV), and 544–564 (FALNTLWVAVSLIIVLASIAV). Positions 570-669 (QIRHKPRVRA…ERQIVEFMFG (100 aa)) constitute a PilZ domain. Residues 750–1596 (LIVLLGLPAA…RVKDTTDASH (847 aa)) form a cyclic di-GMP binding domain region. 2 disordered regions span residues 769–812 (SRAT…IAPA) and 828–868 (TGPA…APPI). Residues 783–809 (VEPPPVNAPPPPSLPQPPGTLPTPPQI) are compositionally biased toward pro residues. A helical membrane pass occupies residues 1553–1573 (LTLYVLGLVGAGLVAAAAVRL).

The protein in the N-terminal section; belongs to the glycosyltransferase 2 family. It in the C-terminal section; belongs to the AcsB/BcsB family.

The protein resides in the cell inner membrane. The enzyme catalyses [(1-&gt;4)-beta-D-glucosyl](n) + UDP-alpha-D-glucose = [(1-&gt;4)-beta-D-glucosyl](n+1) + UDP + H(+). This is Cellulose synthase 2 (acsAII) from Novacetimonas hansenii (Komagataeibacter hansenii).